A 202-amino-acid polypeptide reads, in one-letter code: Imidazoleglycerol-phosphate dehydratase (202 aa).

It belongs to the imidazoleglycerol-phosphate dehydratase family.

The protein resides in the cytoplasm. The catalysed reaction is D-erythro-1-(imidazol-4-yl)glycerol 3-phosphate = 3-(imidazol-4-yl)-2-oxopropyl phosphate + H2O. Its pathway is amino-acid biosynthesis; L-histidine biosynthesis; L-histidine from 5-phospho-alpha-D-ribose 1-diphosphate: step 6/9. The polypeptide is Imidazoleglycerol-phosphate dehydratase (Parasynechococcus marenigrum (strain WH8102)).